Here is a 194-residue protein sequence, read N- to C-terminus: Ribonuclease VapC1 (194 aa).

The PINc domain occupies 34-134 (YVIDTSAIIS…TDDYSIQNVA (101 aa)). Mg(2+) contacts are provided by aspartate 37 and aspartate 150.

The protein belongs to the PINc/VapC protein family. Requires Mg(2+) as cofactor.

Its function is as follows. Toxic component of a type II toxin-antitoxin (TA) system. An RNase. The sequence is that of Ribonuclease VapC1 from Thermoplasma acidophilum (strain ATCC 25905 / DSM 1728 / JCM 9062 / NBRC 15155 / AMRC-C165).